Here is a 274-residue protein sequence, read N- to C-terminus: Nickel/cobalt efflux system RcnA (274 aa).

The Periplasmic portion of the chain corresponds to 1 to 12 (MGEFPTLLQQGN). The helical transmembrane segment at 13 to 33 (GWFFIPSAILLGILHGLEPGH) threads the bilayer. At 34-51 (SKTMMAAFIIAIKGTVKQ) the chain is on the cytoplasmic side. A helical transmembrane segment spans residues 52-72 (AVMLGLAATLSHTAIVWLIAL). Residues 73-85 (GGMYLSRAFTAQS) are Periplasmic-facing. The helical transmembrane segment at 86–106 (VEPWLQLISAIIILSTACWMF) threads the bilayer. The Cytoplasmic segment spans residues 107–174 (WRTWRGEQQW…FDGQTVTNGQ (68 aa)). Residues 122 to 141 (HHDHDHDHDHDHDHHGHIHP) are compositionally biased toward basic and acidic residues. The disordered stretch occupies residues 122-143 (HHDHDHDHDHDHDHHGHIHPEG). The chain crosses the membrane as a helical span at residues 175–195 (ILLFGLTGGLIPCPAAITVLL). The Periplasmic segment spans residues 196–209 (ICIQLKAFTLGATM). The chain crosses the membrane as a helical span at residues 210–230 (VLSFSLSLALTLVTVGVGAAI). Topologically, residues 231-251 (SVQQAAKRWSGFSTLARRAPY) are cytoplasmic. A helical membrane pass occupies residues 252–272 (FSSILIGLVGVYMGIHGYTGI). Residues 273–274 (MQ) are Periplasmic-facing.

Belongs to the NiCoT transporter (TC 2.A.52) family. RcnA subfamily.

It localises to the cell inner membrane. Its function is as follows. Efflux system for nickel and cobalt. This Salmonella paratyphi A (strain ATCC 9150 / SARB42) protein is Nickel/cobalt efflux system RcnA (rcnA).